The primary structure comprises 317 residues: tRNA pseudouridine synthase B (317 aa).

The active-site Nucleophile is Asp47.

The protein belongs to the pseudouridine synthase TruB family. Type 1 subfamily.

The catalysed reaction is uridine(55) in tRNA = pseudouridine(55) in tRNA. Its function is as follows. Responsible for synthesis of pseudouridine from uracil-55 in the psi GC loop of transfer RNAs. The polypeptide is tRNA pseudouridine synthase B (Shewanella sp. (strain ANA-3)).